The chain runs to 1775 residues: Internalin I (1775 aa).

The signal sequence occupies residues 1–28; sequence MKKKFSIVIISVLLLGYLAPFDTLLVGA. Residues 36-50 show a composition bias toward low complexity; the sequence is DTTVKTAETETATEA. The interval 36-97 is disordered; that stretch reads DTTVKTAETE…SNIKTEINTD (62 aa). Over residues 58–85 the composition is skewed to basic and acidic residues; the sequence is DNEKAEEPKEAEASKETTEKEEKAKTKE. 27 LRR repeats span residues 152 to 176, 180 to 201, 202 to 224, 225 to 247, 248 to 269, 274 to 295, 296 to 318, 319 to 341, 342 to 364, 365 to 386, 387 to 409, 410 to 431, 432 to 453, 454 to 475, 476 to 497, 498 to 519, 520 to 541, 542 to 563, 564 to 585, 586 to 607, 608 to 629, 630 to 650, 654 to 675, 682 to 704, 705 to 726, 727 to 748, and 749 to 770; these read AISQ…EGLQ, NLTS…KDLV, NLVS…EGLV, NLQE…AALP, VLKE…NPAG, ELET…AKLP, KLKN…KGAT, KLQL…SGLS, ELEM…KDLP, NLVN…NNLP, KLQT…TDMP, QLKT…DNLP, KLEK…NDLP, RLSY…KKLP, LLEW…TNFP, SLNY…TELP, SLKE…HDMP, NLRK…DNLP, KLQN…HDLP, SLET…DNLP, ELTY…GDLP, KLEI…GTMD, KLRN…GNLS, NLTE…STLS, RLIY…SNLT, TLQE…SDLD, and NLNK…ANMV. The region spanning 782–869 is the LRRCT domain; it reads TYTLPTVLSY…SAVKVTANAE (88 aa). MucBP domains lie at 1507 to 1566, 1572 to 1631, and 1641 to 1702; these read DAAA…EQTV, AIEP…PQTI, and SKKS…SQTV. Positions 1713–1737 are disordered; that stretch reads SKDEPKVKGKTNQPPSADTKLKVDN. The LPXTG sorting signal signature appears at 1740–1744; the sequence is LPATG. Pentaglycyl murein peptidoglycan amidated threonine is present on Thr-1743. A propeptide spans 1744–1775 (removed by sortase); that stretch reads GDTENMALAVLIGFNMLLVASIFLFRKPKTNQ.

It belongs to the internalin family.

It is found in the secreted. It localises to the cell wall. Its function is as follows. A role in virulence could not be demonstrated. The sequence is that of Internalin I (inlI) from Listeria monocytogenes serotype 4b (strain F2365).